The primary structure comprises 248 residues: (2S)-[(R)-hydroxy(phenyl)methyl]succinyl-CoA dehydrogenase subunit BbsD (248 aa).

S15, D36, D62, I63, N89, Y153, and K157 together coordinate NAD(+). Y153 serves as the catalytic Proton acceptor.

The protein belongs to the short-chain dehydrogenases/reductases (SDR) family. In terms of assembly, heterotetramer composed of 2 inactive BbsC subunits and 2 active BbsD subunits.

It catalyses the reaction (2S)-[(R)-hydroxy(phenyl)methyl]succinyl-CoA + NAD(+) = (S)-2-benzoylsuccinyl-CoA + NADH + H(+). The protein operates within xenobiotic degradation; toluene degradation. Activity is probably regulated by the inactive BbsC subunit. Its function is as follows. Involved in an anaerobic toluene degradation pathway. Active subunit that catalyzes the oxidation of 2-(alpha-hydroxybenzyl)succinyl-CoA to 2-benzoylsuccinyl-CoA. In vitro, can catalyze the NADH-dependent reduction of the artificial substrates 2,2-dichloroacetophene and 2,4'-dichloroacetophenone. In Thauera aromatica, this protein is (2S)-[(R)-hydroxy(phenyl)methyl]succinyl-CoA dehydrogenase subunit BbsD.